The sequence spans 625 residues: Chaperone protein HtpG (625 aa).

The segment at 1-341 (MERKEFKAES…SEDLSLNISR (341 aa)) is a; substrate-binding. Residues 342–551 (EMLQHDRQLK…EGEVSIEMEK (210 aa)) form a b region. The tract at residues 552 to 625 (VLRAMPDNQN…FSNDICKVMA (74 aa)) is c.

Belongs to the heat shock protein 90 family. Homodimer.

It localises to the cytoplasm. Its function is as follows. Molecular chaperone. Has ATPase activity. This chain is Chaperone protein HtpG, found in Halalkalibacterium halodurans (strain ATCC BAA-125 / DSM 18197 / FERM 7344 / JCM 9153 / C-125) (Bacillus halodurans).